The sequence spans 197 residues: ADP-ribosylation factor-like protein 6-interacting protein 1 (197 aa).

4 consecutive transmembrane segments (helical) span residues 43–63 (VVFG…LSLI), 64–84 (TLLS…PMVS), 129–149 (TVFV…GAII), and 150–170 (NNLL…GLQN).

The protein belongs to the ARL6ip family.

It localises to the membrane. This chain is ADP-ribosylation factor-like protein 6-interacting protein 1, found in Drosophila melanogaster (Fruit fly).